The following is a 963-amino-acid chain: Low-density lipoprotein receptor-related protein 8 (963 aa).

The first 32 residues, 1-32, serve as a signal peptide directing secretion; sequence MGLPEPGPLRLLALLLLLLLLLLLQLQHLAAA. The Extracellular segment spans residues 42–826; the sequence is GPAKDCEKDQ…SKMGSTVTAA (785 aa). LDL-receptor class A domains lie at 46–82, 85–123, 126–164, 166–202, 205–246, 258–295, and 298–334; these read DCEK…DDCP, TCAD…ATCT, VCPA…AGCA, LCAP…RGCA, ACGP…ELCG, ACAT…ADCP, and TCRG…AGCL. Disulfide bonds link Cys-47-Cys-59, Cys-54-Cys-72, Cys-66-Cys-81, Cys-86-Cys-98, Cys-93-Cys-111, Cys-105-Cys-122, Cys-127-Cys-141, Cys-134-Cys-154, Cys-148-Cys-163, Cys-167-Cys-179, Cys-174-Cys-192, Cys-186-Cys-201, Cys-206-Cys-221, Cys-213-Cys-234, Cys-228-Cys-245, Cys-259-Cys-272, Cys-267-Cys-285, Cys-279-Cys-294, Cys-299-Cys-311, Cys-306-Cys-324, Cys-318-Cys-333, Cys-340-Cys-351, Cys-347-Cys-360, Cys-362-Cys-374, Cys-380-Cys-390, Cys-386-Cys-399, and Cys-401-Cys-414. The Ca(2+) site is built by Trp-64, Asp-67, Asp-69, Asp-71, Asp-77, and Glu-78. Residue Asn-176 is glycosylated (N-linked (GlcNAc...) asparagine). Residues 336 to 375 enclose the EGF-like 1 domain; the sequence is GLNECLHNNGGCSHICTDLKIGFECTCPAGFQLLDQKTCG. The EGF-like 2; calcium-binding domain occupies 376-415; the sequence is DIDECKDPDACSQICVNYKGYFKCECYPGYEMDLLTKNCK. An N-linked (GlcNAc...) asparagine glycan is attached at Asn-441. LDL-receptor class B repeat units lie at residues 462–508, 509–551, 552–595, 596–639, and 640–681; these read NRIY…DWVH, KHIY…DPLR, GFMY…DLLS, QRLY…VFED, and KVFW…FHEL. N-linked (GlcNAc...) asparagine glycans are attached at residues Asn-518 and Asn-538. The tract at residues 740–798 is clustered O-linked oligosaccharides; the sequence is STSTTTLASTMTRTVPATTRAPGTTVHRSTYQNHSTETPSLTAAVPSSVSVPRAPSISP. Residues 754 to 815 are disordered; sequence VPATTRAPGT…SNHSQHYANE (62 aa). A compositionally biased stretch (polar residues) spans 765–777; sequence VHRSTYQNHSTET. Residue Asn-772 is glycosylated (N-linked (GlcNAc...) asparagine). The segment covering 778–799 has biased composition (low complexity); the sequence is PSLTAAVPSSVSVPRAPSISPS. Over residues 800-812 the composition is skewed to polar residues; that stretch reads TLSPATSNHSQHY. A glycan (N-linked (GlcNAc...) asparagine) is linked at Asn-807. The chain crosses the membrane as a helical span at residues 827–847; that stretch reads VIGIIVPIVVIALLCMSGYLI. Residues 848–963 lie on the Cytoplasmic side of the membrane; the sequence is WRNWKRKNTK…ALSLEDDGLP (116 aa).

This sequence belongs to the LDLR family. In terms of assembly, homooligomer. Interacts with VLDLR. Reelin associates with two or more receptor molecules. Interacts with DAB1 and JNK-interacting proteins. Interacts with SNX17. Interacts with PCSK9. Interacts with MDK; this interaction is calcium dependent. Interacts with CLU. As to quaternary structure, (Microbial infection) Interacts with Semliki Forest virus E2-E1 heterodimer; this interaction mediates viral entry to host cell. (Microbial infection) Interacts (via class A repeats) with Eastern equine encephalitis virus spike glycoprotein E2; this interaction mediates viral entry into host cell. O-glycosylated. Some alternatively spliced isoforms lack the O-linked sugar domain. In terms of processing, undergoes sequential, furin and gamma-secretase dependent, proteolytic processing, resulting in the extracellular release of the entire ligand-binding domain as a soluble polypeptide and in the intracellular domain (ICD) release into the cytoplasm. The gamma-secretase-dependent proteolytical processing occurs after the bulk of the extracellular domain has been shed, in a furin-dependent manner, in alternatively spliced isoforms carrying the furin cleavage site. Hypoglycosylation (mainly hypo-O-glycosylation) leads to increased extracellular cleavage, which in turn results in accelerating release of the intracellular domain (ICD) by the gamma-secretase. The resulting receptor fragment is able to inhibit Reelin signaling and in particular the Reelin-induced DAB1 phosphorylation. Post-translationally, tyrosine phosphorylated upon apoE binding. Ubiquitinated by MYLIP leading to degradation. In terms of tissue distribution, expressed mainly in brain and placenta. Also expressed in platelets and megakaryocytic cells. Not expressed in the liver.

Its subcellular location is the cell membrane. It is found in the secreted. In terms of biological role, cell surface receptor for Reelin (RELN) and apolipoprotein E (apoE)-containing ligands. LRP8 participates in transmitting the extracellular Reelin signal to intracellular signaling processes, by binding to DAB1 on its cytoplasmic tail. Reelin acts via both the VLDL receptor (VLDLR) and LRP8 to regulate DAB1 tyrosine phosphorylation and microtubule function in neurons. LRP8 has higher affinity for Reelin than VLDLR. LRP8 is thus a key component of the Reelin pathway which governs neuronal layering of the forebrain during embryonic brain development. Binds the endoplasmic reticulum resident receptor-associated protein (RAP). Binds dimers of beta 2-glycoprotein I and may be involved in the suppression of platelet aggregation in the vasculature. Highly expressed in the initial segment of the epididymis, where it affects the functional expression of clusterin and phospholipid hydroperoxide glutathione peroxidase (PHGPx), two proteins required for sperm maturation. May also function as an endocytic receptor. Not required for endocytic uptake of SEPP1 in the kidney which is mediated by LRP2. Together with its ligand, apolipoprotein E (apoE), may indirectly play a role in the suppression of the innate immune response by controlling the survival of myeloid-derived suppressor cells. Its function is as follows. (Microbial infection) Acts as a receptor for Semliki Forest virus. The chain is Low-density lipoprotein receptor-related protein 8 (LRP8) from Homo sapiens (Human).